The sequence spans 45 residues: Large ribosomal subunit protein bL34 (45 aa).

The segment at 1–45 is disordered; the sequence is MTKRTFGGTSRKRKRVSGFRVRMRTHTGRSVIRSRRKKGRSRIAV. Residues 10 to 45 are compositionally biased toward basic residues; it reads SRKRKRVSGFRVRMRTHTGRSVIRSRRKKGRSRIAV.

This sequence belongs to the bacterial ribosomal protein bL34 family.

This is Large ribosomal subunit protein bL34 from Prochlorococcus marinus (strain SARG / CCMP1375 / SS120).